A 235-amino-acid chain; its full sequence is MNSGYSANIFPSSSSPTLYQSHQLQPNPSATMYQATPRDMGKPPVRGKTSPYGFFVKMCYEEHKKKYPNENVQVTEISKKCSEKWKTMVDDEKRRFYELAQKDAERYQAEVSVAAYGGEDAMRKRKRAKKDPHAPKRALSAFFFYSQDKRPEIQAGHPDWKVGQVAQELGKMWKLVPQETKDMYEQKAQADKDRYADEMRNYKAEMQKMSGMDHYDDDNIHHVVHVEDINSQNIS.

Residues 1–34 (MNSGYSANIFPSSSSPTLYQSHQLQPNPSATMYQ) show a composition bias toward polar residues. A disordered region spans residues 1–47 (MNSGYSANIFPSSSSPTLYQSHQLQPNPSATMYQATPRDMGKPPVRG). DNA-binding regions (HMG box) lie at residues 47 to 117 (GKTS…AAYG) and 135 to 203 (PKRA…RNYK).

Belongs to the HMGB family.

It is found in the nucleus. The polypeptide is High mobility group protein 1.2 (hmg-1.2) (Caenorhabditis elegans).